The sequence spans 874 residues: MKSAEIREAFLGFFEEQGHTRVPSSSLIPGNDPTLLFTNAGMNQFKDCFLGQEKRAYTRAVTSQKCVRAGGKHNDLENVGYTARHHTFFEMLGNFSFGDYFKRDAITYAWTFLTSEKWLNLPKEKLWVTVYATDDEAYDIWTKEIGVPAERMVRIGDNKGAPYASDNFWTMGDTGPCGPCSEIFFDHGADIWGGPPGSPEEDGDRYIEIWNNVFMQFNRTADGVLHPLPAPSVDTGMGLERVSAVLQHVHSNYEIDLFQSLLTASANAIGCSNDNQASLKVVADHIRSCGFLIADGVLPSSEGRGYVLRRIIRRACRHGNKLGAKGSFFYQIVAALVAEMGSAFPELVQQQSHIERVLRGEEEQFAKTLEQGLKIIEQDLAELKGTVVPGEIVFKLYDTYGFPMDLTGDIARERNLTLDEEGFEREMEAQRVRARSASSFGMDYNSLVKVDVATQFTGYSATTGSASVVALYKDGQSVTHLNAGEEGVVILDTTPFYAESGGQIGDSGFLLAGDARFDVSDTTKTGGAFLHHGVVASGSLSVGVQVETQVADEVRDATKLNHSATHLLHAALRQVLGEHVQQKGSLVDSQRLRFDFSHFESIKPEQLRALEDIVNAEIRKNTPVVTEETDIDTAKKKGAMALFGEKYGDSVRVLSMGGEFSVELCGGIHASRTGDISLFKIVSEGGVAAGVRRIEAVTGAAALAWLNSAEDQLKEAATLVKGNRDNLLDKLTAVLERNRLLEKQLEQLQAKAASAAGDDLSSAALDVKGVKVLATRLDGQDGKALLALVDQLKNKLGRAVILLGSVHEDKVVLVAGVTKDLTGQLKAGDLMKQAATAVGGKGGGRPDMAQGGGVDATALDSALALAVPFVEQGI.

The Zn(2+) site is built by His562, His566, Cys665, and His669.

This sequence belongs to the class-II aminoacyl-tRNA synthetase family. Zn(2+) serves as cofactor.

The protein localises to the cytoplasm. The catalysed reaction is tRNA(Ala) + L-alanine + ATP = L-alanyl-tRNA(Ala) + AMP + diphosphate. In terms of biological role, catalyzes the attachment of alanine to tRNA(Ala) in a two-step reaction: alanine is first activated by ATP to form Ala-AMP and then transferred to the acceptor end of tRNA(Ala). Also edits incorrectly charged Ser-tRNA(Ala) and Gly-tRNA(Ala) via its editing domain. In Pseudomonas syringae pv. tomato (strain ATCC BAA-871 / DC3000), this protein is Alanine--tRNA ligase.